The primary structure comprises 356 residues: Heat-inducible transcription repressor HrcA (356 aa).

This sequence belongs to the HrcA family.

Functionally, negative regulator of class I heat shock genes (grpE-dnaK-dnaJ and groELS operons). Prevents heat-shock induction of these operons. This is Heat-inducible transcription repressor HrcA from Chlorobaculum parvum (strain DSM 263 / NCIMB 8327) (Chlorobium vibrioforme subsp. thiosulfatophilum).